A 215-amino-acid chain; its full sequence is CASP-like protein 1U3 (215 aa).

The Cytoplasmic segment spans residues 1 to 13; sequence MHDEEKKEPKWVT. A helical transmembrane segment spans residues 14–34; that stretch reads AVSIAGRIAGMGLAVAAAVLM. Over 35 to 68 the chain is Extracellular; it reads STASQCTVYYAAPAASAYGGAARARTVTYSDFPP. The chain crosses the membrane as a helical span at residues 69 to 89; sequence FVFLVGAASIAAFLEAIAIFL. The Cytoplasmic portion of the chain corresponds to 90 to 105; the sequence is VVWKKGKDKTTKVLMP. Residues 106–126 traverse the membrane as a helical segment; it reads LLGVAVPALLYSATGAAFAAV. The Extracellular portion of the chain corresponds to 127-161; the sequence is SDMSYCSANGKRVSICAGSAAAGGGVSGGTNFCSQ. Residues 162–182 form a helical membrane-spanning segment; that stretch reads VHIAVYLSLAAAVAVSVAEVV. Over 183–215 the chain is Cytoplasmic; that stretch reads RGLGGSASGGGSDSDSSSSSESGGCDHGCHHKH. A disordered region spans residues 187–215; it reads GSASGGGSDSDSSSSSESGGCDHGCHHKH. Residues 195-205 show a composition bias toward low complexity; sequence DSDSSSSSESG.

Belongs to the Casparian strip membrane proteins (CASP) family. In terms of assembly, homodimer and heterodimers.

It localises to the cell membrane. The protein is CASP-like protein 1U3 of Sorghum bicolor (Sorghum).